Consider the following 504-residue polypeptide: Maturase K (504 aa).

The protein belongs to the intron maturase 2 family. MatK subfamily.

Its subcellular location is the plastid. It is found in the chloroplast. In terms of biological role, usually encoded in the trnK tRNA gene intron. Probably assists in splicing its own and other chloroplast group II introns. This Fagus japonica (Japanese beech) protein is Maturase K.